The chain runs to 260 residues: PsbP domain-containing protein 4, chloroplastic (260 aa).

The protein belongs to the PsbP family.

The protein localises to the plastid. It localises to the chloroplast thylakoid lumen. The sequence is that of PsbP domain-containing protein 4, chloroplastic (PPD4) from Arabidopsis thaliana (Mouse-ear cress).